The following is a 577-amino-acid chain: Glucose-6-phosphate 1-dehydrogenase, chloroplastic (577 aa).

Residues 1–20 (MGVQLRLNPCSSSSAATSPS) are disordered. A chloroplast-targeting transit peptide spans 1-63 (MGVQLRLNPC…QPRKHFEVFS (63 aa)). Positions 11 to 20 (SSSSAATSPS) are enriched in low complexity. NADP(+)-binding positions include 97–104 (GASGDLAK) and R131. A disulfide bond links C149 and C157. K234 is an NADP(+) binding site. D-glucose 6-phosphate contacts are provided by residues K234, 264–268 (HYLGK), E302, and D321. The active-site Proton acceptor is H326. K419 is a binding site for NADP(+). Residues K422 and K427 each coordinate D-glucose 6-phosphate. 3 residues coordinate NADP(+): R428, R432, and R461. Q463 lines the D-glucose 6-phosphate pocket. NADP(+)-binding positions include 469–471 (YLK) and R554.

It belongs to the glucose-6-phosphate dehydrogenase family. Homodimer. In terms of tissue distribution, green tissues, leaves and chloroplasts.

It localises to the plastid. The protein resides in the chloroplast. The catalysed reaction is D-glucose 6-phosphate + NADP(+) = 6-phospho-D-glucono-1,5-lactone + NADPH + H(+). Its pathway is carbohydrate degradation; pentose phosphate pathway; D-ribulose 5-phosphate from D-glucose 6-phosphate (oxidative stage): step 1/3. With respect to regulation, regulated by metabolites. Post-translationally inactivated by cysteine-mediated redox modification via the ferredoxin-thioredoxin system in the light and this avoids futile cycles with photosynthetic CO2 fixation. Its function is as follows. Catalyzes the rate-limiting step of the oxidative pentose-phosphate pathway, which represents a route for the dissimilation of carbohydrates besides glycolysis. The main function of this enzyme is to provide reducing power (NADPH) and pentose phosphates for fatty acid and nucleic acid synthesis which are involved in membrane synthesis and cell division. This chain is Glucose-6-phosphate 1-dehydrogenase, chloroplastic, found in Solanum tuberosum (Potato).